The sequence spans 285 residues: Protoheme IX farnesyltransferase (285 aa).

8 consecutive transmembrane segments (helical) span residues 19 to 39 (RIIW…GKLM), 40 to 60 (PLSI…SMII), 90 to 110 (AIYV…LDNP), 111 to 131 (LTSF…TVWL), 135 to 155 (SPLN…AGYA), 165 to 185 (SILL…ALAL), 220 to 240 (IPFA…VAGI), and 265 to 285 (FKFS…TRLI).

It belongs to the UbiA prenyltransferase family. Protoheme IX farnesyltransferase subfamily.

The protein localises to the cell membrane. The catalysed reaction is heme b + (2E,6E)-farnesyl diphosphate + H2O = Fe(II)-heme o + diphosphate. Its pathway is porphyrin-containing compound metabolism; heme O biosynthesis; heme O from protoheme: step 1/1. In terms of biological role, converts heme B (protoheme IX) to heme O by substitution of the vinyl group on carbon 2 of heme B porphyrin ring with a hydroxyethyl farnesyl side group. In Metallosphaera sedula (strain ATCC 51363 / DSM 5348 / JCM 9185 / NBRC 15509 / TH2), this protein is Protoheme IX farnesyltransferase.